Consider the following 210-residue polypeptide: Thymidylate kinase (210 aa).

10 to 17 contacts ATP; it reads GPEGAGKS.

Belongs to the thymidylate kinase family.

It carries out the reaction dTMP + ATP = dTDP + ADP. Phosphorylation of dTMP to form dTDP in both de novo and salvage pathways of dTTP synthesis. This is Thymidylate kinase from Pseudomonas syringae pv. syringae (strain B728a).